The primary structure comprises 329 residues: Interleukin-12 subunit beta (329 aa).

The signal sequence occupies residues 1 to 22 (MHPQQLVIAWLSLVLLAPPLMA). The Ig-like C2-type domain occupies 23–106 (IWELEKNVYV…LSHSFLLIHK (84 aa)). A disulfide bond links cysteine 50 and cysteine 90. 2 N-linked (GlcNAc...) asparagine glycosylation sites follow: asparagine 135 and asparagine 223. The region spanning 238 to 329 (PPKNLQLKPL…WSNWASVSCS (92 aa)) is the Fibronectin type-III domain.

It belongs to the IL-12B family. As to quaternary structure, heterodimer with IL12A; disulfide-linked. The heterodimer is known as interleukin IL-12. Heterodimer with IL23A; disulfide-linked. The heterodimer is known as interleukin IL-23. Also secreted as a monomer. Interacts with NBR1; this interaction promotes IL-12 secretion.

Its subcellular location is the secreted. Functionally, cytokine that can act as a growth factor for activated T and NK cells, enhance the lytic activity of NK/lymphokine-activated killer cells, and stimulate the production of IFN-gamma by resting PBMC. In terms of biological role, associates with IL23A to form the IL-23 interleukin, a heterodimeric cytokine which functions in innate and adaptive immunity. IL-23 may constitute with IL-17 an acute response to infection in peripheral tissues. IL-23 binds to a heterodimeric receptor complex composed of IL12RB1 and IL23R, activates the Jak-Stat signaling cascade, stimulates memory rather than naive T-cells and promotes production of pro-inflammatory cytokines. IL-23 induces autoimmune inflammation and thus may be responsible for autoimmune inflammatory diseases and may be important for tumorigenesis. This chain is Interleukin-12 subunit beta (IL12B), found in Felis catus (Cat).